Here is a 182-residue protein sequence, read N- to C-terminus: Isopentenyl-diphosphate Delta-isomerase (182 aa).

His-25 and His-32 together coordinate Mn(2+). In terms of domain architecture, Nudix hydrolase spans 30-164; sequence RLHLAFSSWL…PWAFSPWMVM (135 aa). Cys-67 is an active-site residue. His-69 provides a ligand contact to Mn(2+). Glu-87 contributes to the Mg(2+) binding site. Mn(2+) is bound by residues Glu-114 and Glu-116. The active site involves Glu-116.

The protein belongs to the IPP isomerase type 1 family. As to quaternary structure, homodimer. Mg(2+) is required as a cofactor. Requires Mn(2+) as cofactor.

It is found in the cytoplasm. The catalysed reaction is isopentenyl diphosphate = dimethylallyl diphosphate. It participates in isoprenoid biosynthesis; dimethylallyl diphosphate biosynthesis; dimethylallyl diphosphate from isopentenyl diphosphate: step 1/1. Its function is as follows. Catalyzes the 1,3-allylic rearrangement of the homoallylic substrate isopentenyl (IPP) to its highly electrophilic allylic isomer, dimethylallyl diphosphate (DMAPP). This is Isopentenyl-diphosphate Delta-isomerase from Escherichia coli O139:H28 (strain E24377A / ETEC).